The primary structure comprises 80 residues: Large ribosomal subunit protein bL31B (80 aa).

The protein belongs to the bacterial ribosomal protein bL31 family. Type B subfamily. In terms of assembly, part of the 50S ribosomal subunit.

In Xylella fastidiosa (strain M23), this protein is Large ribosomal subunit protein bL31B.